Consider the following 862-residue polypeptide: Rab GTPase-binding effector protein 1 (862 aa).

The residue at position 2 (alanine 2) is an N-acetylalanine. The stretch at 11–345 (DVSLQQRVAE…KKADVEEEIK (335 aa)) forms a coiled coil. N6-acetyllysine is present on lysine 282. The disordered stretch occupies residues 315 to 338 (ELKKKDQEDDEQQRLNKRKDHKKA). Residues serine 374, serine 377, and serine 407 each carry the phosphoserine modification. Position 408 is a phosphothreonine (threonine 408). Serine 410 is subject to Phosphoserine. The interval 435-447 (DESDFGPLVGADS) is interaction with AP1G1, AP1G2, GGA1, GGA2 and GGA3. Residues 534 to 816 (DMCSNYEKQL…LQTELDVSEQ (283 aa)) are a coiled coil.

Belongs to the rabaptin family. As to quaternary structure, homodimer when bound to RAB5A. Heterodimer with RABGEF1. The heterodimer binds RAB4A and RAB5A that have been activated by GTP-binding. Interacts with TSC2. Interacts with GGA1 (via GAE domain), GGA2 (via GAE domain) and GGA3 (via GAE domain). Interacts with AP1G1 (via GAE domain). Interacts with AP1G2 (via GAE domain). Interacts with ECPAS. Interacts with KCNH1. Interacts with PKD1 (via C-terminal domain) and GGA1; the interactions recruit PKD1:PKD2 complex to GGA1 and ARL3 at trans-Golgi network. In terms of processing, proteolytic cleavage by caspases in apoptotic cells causes loss of endosome fusion activity.

Its subcellular location is the cytoplasm. The protein resides in the early endosome. It is found in the recycling endosome. It localises to the cytoplasmic vesicle. In terms of biological role, rab effector protein acting as linker between gamma-adaptin, RAB4A and RAB5A. Involved in endocytic membrane fusion and membrane trafficking of recycling endosomes. Involved in KCNH1 channels trafficking to and from the cell membrane. Stimulates RABGEF1 mediated nucleotide exchange on RAB5A. Mediates the traffic of PKD1:PKD2 complex from the endoplasmic reticulum through the Golgi to the cilium. In Homo sapiens (Human), this protein is Rab GTPase-binding effector protein 1 (RABEP1).